A 515-amino-acid chain; its full sequence is Nectin-1 (515 aa).

The first 30 residues, 1–30, serve as a signal peptide directing secretion; it reads MARMGLAGAAGRWWGLALGLTAFFLPGTHT. Positions 31-141 constitute an Ig-like V-type domain; sequence QVVQVNDSMY…GNRESQLNLT (111 aa). Residues 31–354 lie on the Extracellular side of the membrane; that stretch reads QVVQVNDSMY…GRRAGQMPTA (324 aa). N-linked (GlcNAc...) asparagine glycosylation is found at Asn36, Asn72, Asn139, Asn202, Asn286, Asn297, and Asn332. Cysteines 51 and 124 form a disulfide. Ig-like C2-type domains lie at 145-243 and 247-334; these read KPTN…TLNV and PEVT…VNIT. 2 disulfide bridges follow: Cys172-Cys226 and Cys269-Cys316. The interval 282–299 is interaction with FGFR; sequence WTTLNGSLPKGVEAQNRT. A helical membrane pass occupies residues 355-375; the sequence is IIGGVAGSVLLVLIVVGGIIV. Residues 376 to 515 lie on the Cytoplasmic side of the membrane; it reads ALRRRRHTFK…SFISKKEWYV (140 aa). A disordered region spans residues 399–486; sequence YSKAGIPQHH…DGYGDRTLGY (88 aa). Phosphoserine is present on residues Ser421, Ser433, and Ser434. Residue Tyr435 is modified to Phosphotyrosine. The span at 447–464 shows a compositional bias: basic and acidic residues; that stretch reads GERKVGGPHPKYDEDAKR. Residue Ser509 is modified to Phosphoserine.

It belongs to the nectin family. Cis- and trans-homodimer. Can form trans-heterodimers with NECTIN3 and with NECTIN4. Interaction between NECTIN1 and NECTIN3 on the pre- and postsynaptic sites, respectively, initiates the formation of puncta adherentia junctions between axons and dendrites. Interacts (via cytoplasmic domain) with AFDN (via PDZ domain); this interaction recruits NECTIN1 to cadherin-based adherens junctions and provides a connection with the actin cytoskeleton. Interacts with integrin alphaV/beta3. Interacts (via Ig-like C2-type domain 2) with FGFR1, FGFR2 and FGFR3. As to quaternary structure, (Microbial infection) Interacts with herpes pseudorabies virus/PRV envelope glycoprotein D.

It localises to the cell membrane. Its subcellular location is the cell junction. It is found in the adherens junction. The protein localises to the presynaptic cell membrane. In terms of biological role, cell adhesion molecule that promotes cell-cell contacts and plays important roles in the development of the nervous system. Acts by forming homophilic or heterophilic trans-dimers. Heterophilic interactions have been detected between NECTIN1 and NECTIN3 and between NECTIN1 and NECTIN4. Involved in axon guidance by promoting contacts between the commissural axons and the floor plate cells. Involved in synaptogegesis. Has some neurite outgrowth-promoting activity. Promotes formation of checkerboard-like cellular pattern of hair cells and supporting cells in the auditory epithelium via heterophilic interaction with NECTIN3: NECTIN1 is present in the membrane of hair cells and associates with NECTIN3 on supporting cells, thereby mediating heterotypic adhesion between these two cell types. Required for enamel mineralization. (Microbial infection) Acts as a receptor for pseudorabies virus/PRV. The sequence is that of Nectin-1 from Mus musculus (Mouse).